Consider the following 312-residue polypeptide: Acetyl-coenzyme A carboxylase carboxyl transferase subunit beta (312 aa).

In terms of domain architecture, CoA carboxyltransferase N-terminal spans 24-293 (LWIKCPDSGQ…PHADEVAAPP (270 aa)). The tract at residues 286–312 (ADEVAAPPPPDVEGPPPAAEPVALPPA) is disordered. Residues 291–312 (APPPPDVEGPPPAAEPVALPPA) are compositionally biased toward pro residues.

It belongs to the AccD/PCCB family. Acetyl-CoA carboxylase is a heterohexamer composed of biotin carboxyl carrier protein (AccB), biotin carboxylase (AccC) and two subunits each of ACCase subunit alpha (AccA) and ACCase subunit beta (AccD).

The protein localises to the cytoplasm. The catalysed reaction is N(6)-carboxybiotinyl-L-lysyl-[protein] + acetyl-CoA = N(6)-biotinyl-L-lysyl-[protein] + malonyl-CoA. It functions in the pathway lipid metabolism; malonyl-CoA biosynthesis; malonyl-CoA from acetyl-CoA: step 1/1. Its function is as follows. Component of the acetyl coenzyme A carboxylase (ACC) complex. Biotin carboxylase (BC) catalyzes the carboxylation of biotin on its carrier protein (BCCP) and then the CO(2) group is transferred by the transcarboxylase to acetyl-CoA to form malonyl-CoA. This is Acetyl-coenzyme A carboxylase carboxyl transferase subunit beta from Afipia carboxidovorans (strain ATCC 49405 / DSM 1227 / KCTC 32145 / OM5) (Oligotropha carboxidovorans).